The primary structure comprises 461 residues: Argininosuccinate lyase (461 aa).

The protein belongs to the lyase 1 family. Argininosuccinate lyase subfamily.

It localises to the cytoplasm. The enzyme catalyses 2-(N(omega)-L-arginino)succinate = fumarate + L-arginine. It participates in amino-acid biosynthesis; L-arginine biosynthesis; L-arginine from L-ornithine and carbamoyl phosphate: step 3/3. This chain is Argininosuccinate lyase, found in Chlorobium luteolum (strain DSM 273 / BCRC 81028 / 2530) (Pelodictyon luteolum).